The following is a 101-amino-acid chain: Phosphoribosyl-ATP pyrophosphatase (101 aa).

It belongs to the PRA-PH family.

It is found in the cytoplasm. The catalysed reaction is 1-(5-phospho-beta-D-ribosyl)-ATP + H2O = 1-(5-phospho-beta-D-ribosyl)-5'-AMP + diphosphate + H(+). It functions in the pathway amino-acid biosynthesis; L-histidine biosynthesis; L-histidine from 5-phospho-alpha-D-ribose 1-diphosphate: step 2/9. In Natronomonas pharaonis (strain ATCC 35678 / DSM 2160 / CIP 103997 / JCM 8858 / NBRC 14720 / NCIMB 2260 / Gabara) (Halobacterium pharaonis), this protein is Phosphoribosyl-ATP pyrophosphatase.